The chain runs to 233 residues: Biosynthetic peptidoglycan transglycosylase (233 aa).

Residues 17-37 traverse the membrane as a helical segment; it reads IVLAVLALVILPYALIFFYVL.

The protein belongs to the glycosyltransferase 51 family.

It localises to the cell inner membrane. The catalysed reaction is [GlcNAc-(1-&gt;4)-Mur2Ac(oyl-L-Ala-gamma-D-Glu-L-Lys-D-Ala-D-Ala)](n)-di-trans,octa-cis-undecaprenyl diphosphate + beta-D-GlcNAc-(1-&gt;4)-Mur2Ac(oyl-L-Ala-gamma-D-Glu-L-Lys-D-Ala-D-Ala)-di-trans,octa-cis-undecaprenyl diphosphate = [GlcNAc-(1-&gt;4)-Mur2Ac(oyl-L-Ala-gamma-D-Glu-L-Lys-D-Ala-D-Ala)](n+1)-di-trans,octa-cis-undecaprenyl diphosphate + di-trans,octa-cis-undecaprenyl diphosphate + H(+). It participates in cell wall biogenesis; peptidoglycan biosynthesis. Peptidoglycan polymerase that catalyzes glycan chain elongation from lipid-linked precursors. In Rhizobium leguminosarum bv. trifolii (strain WSM2304), this protein is Biosynthetic peptidoglycan transglycosylase.